We begin with the raw amino-acid sequence, 380 residues long: Cytochrome b (380 aa).

Helical transmembrane passes span 34 to 54, 78 to 99, 114 to 134, and 179 to 199; these read FGSLLGICLMTQILTGLLLAT, WLIRNLHANGASFFFICIYLHI, WNTGVILLLTLMATAFVGYVL, and FFALHFLLPFMIAGLTTIHLT. Positions 84 and 98 each coordinate heme b. 2 residues coordinate heme b: H183 and H197. H202 serves as a coordination point for a ubiquinone. Helical transmembrane passes span 227–247, 289–309, 321–341, and 348–368; these read LKDILGFTLMLLPLTILALFS, LGGVLALAASVLILFLTPFLH, ISQLLFWILVTNLLILTWVGS, and FIIIGQLASITYFTILLILFP.

The protein belongs to the cytochrome b family. In terms of assembly, the cytochrome bc1 complex contains 11 subunits: 3 respiratory subunits (MT-CYB, CYC1 and UQCRFS1), 2 core proteins (UQCRC1 and UQCRC2) and 6 low-molecular weight proteins (UQCRH/QCR6, UQCRB/QCR7, UQCRQ/QCR8, UQCR10/QCR9, UQCR11/QCR10 and a cleavage product of UQCRFS1). This cytochrome bc1 complex then forms a dimer. Heme b serves as cofactor.

The protein resides in the mitochondrion inner membrane. Component of the ubiquinol-cytochrome c reductase complex (complex III or cytochrome b-c1 complex) that is part of the mitochondrial respiratory chain. The b-c1 complex mediates electron transfer from ubiquinol to cytochrome c. Contributes to the generation of a proton gradient across the mitochondrial membrane that is then used for ATP synthesis. The sequence is that of Cytochrome b (MT-CYB) from Pelecanoides magellani (Magellanic diving petrel).